Here is a 486-residue protein sequence, read N- to C-terminus: MSIDPAGSQASRQLPINLFTRSPTDAIPQSTYFIPSAWRRFQLSELINQVLGNTAENGSKPVPFDFLVNGEVLRGSLEAWVKKNRGGDEESQIDVEYVRSVMPPEEAARVEVEDWVSGLSLSRKGYVLLSSYLSHLQVLPLSAAAQSSSALYTLPLPTSLGATSCTWVSPQTQETDILVAAGGVDRQTHVYSIPSLSPDTADAPRELYTLHGHTGPISSVIASSSGKEIVTGSWDGNINLYVLPDAEPTEHQVPADPVSYLPGQGTKKRRKLEKDQEKAPIEGLTDGDATGEGGWRRAPDAVMRGHTGRVGGLVWDKLDSGKIWSAGWDGSVRGWEVETGAAGALRQGPFDKSALCVDQWKMNGTLATGNMDRTICLWDTRQATSLISLTLPTTSPVPSVTCHPTSPFTLASATYSGVVQIWDIRSPKTALFTVSKAQSKLADPNRKVTKNGKVLGERLLAVDWNGEVLVAGGEDGEVGIWRARGE.

Positions 12–99 (RQLPINLFTR…ESQIDVEYVR (88 aa)) are ubiquitin-like (UBL) domain. WD repeat units lie at residues 212–251 (GHTG…PTEH), 305–345 (GHTG…AGAL), 349–388 (PFDK…SLIS), 392–432 (PTTS…TALF), and 454–486 (VLGE…ARGE). Positions 249-299 (TEHQVPADPVSYLPGQGTKKRRKLEKDQEKAPIEGLTDGDATGEGGWRRAP) are disordered.

Belongs to the WD repeat WDR12/YTM1 family. As to quaternary structure, component of the NOP7 complex, composed of ERB1, NOP7 and YTM1. The complex is held together by ERB1, which interacts with NOP7 via its N-terminal domain and with YTM1 via a high-affinity interaction between the seven-bladed beta-propeller domains of the 2 proteins. The NOP7 complex associates with the 66S pre-ribosome. Interacts (via UBL domain) with MDN1 (via VWFA/MIDAS domain).

It is found in the nucleus. The protein resides in the nucleolus. Its subcellular location is the nucleoplasm. Component of the NOP7 complex, which is required for maturation of the 25S and 5.8S ribosomal RNAs and formation of the 60S ribosome. This chain is Ribosome biogenesis protein YTM1, found in Cryptococcus neoformans var. neoformans serotype D (strain B-3501A) (Filobasidiella neoformans).